The sequence spans 202 residues: FMN-dependent NADH:quinone oxidoreductase (202 aa).

FMN contacts are provided by residues Ser-9, 15–17 (SAS), and 94–97 (MYNL).

It belongs to the azoreductase type 1 family. In terms of assembly, homodimer. The cofactor is FMN.

It catalyses the reaction 2 a quinone + NADH + H(+) = 2 a 1,4-benzosemiquinone + NAD(+). The catalysed reaction is N,N-dimethyl-1,4-phenylenediamine + anthranilate + 2 NAD(+) = 2-(4-dimethylaminophenyl)diazenylbenzoate + 2 NADH + 2 H(+). Functionally, quinone reductase that provides resistance to thiol-specific stress caused by electrophilic quinones. Also exhibits azoreductase activity. Catalyzes the reductive cleavage of the azo bond in aromatic azo compounds to the corresponding amines. The polypeptide is FMN-dependent NADH:quinone oxidoreductase (Gluconobacter oxydans (strain 621H) (Gluconobacter suboxydans)).